The chain runs to 446 residues: Bifunctional protein GlmU (446 aa).

Residues 1–229 (MTEKPVALIV…EAETLGINTR (229 aa)) form a pyrophosphorylase region. UDP-N-acetyl-alpha-D-glucosamine is bound by residues 11-14 (LAAG), Lys25, Gln78, 83-84 (GT), 106-108 (YGD), Gly141, Glu155, Asn170, and Asn227. Asp108 contacts Mg(2+). Asn227 serves as a coordination point for Mg(2+). Residues 230–250 (AELAAAEAAFQVRARARALED) are linker. Residues 251–446 (GVTMTDPATV…MQALRQKKGN (196 aa)) form an N-acetyltransferase region. Positions 316 and 334 each coordinate UDP-N-acetyl-alpha-D-glucosamine. His346 functions as the Proton acceptor in the catalytic mechanism. UDP-N-acetyl-alpha-D-glucosamine is bound by residues Tyr349 and Asn360. Residues Ala363, 369–370 (NY), Ser388, Ser406, and Arg423 contribute to the acetyl-CoA site.

The protein in the N-terminal section; belongs to the N-acetylglucosamine-1-phosphate uridyltransferase family. It in the C-terminal section; belongs to the transferase hexapeptide repeat family. In terms of assembly, homotrimer. Mg(2+) is required as a cofactor.

Its subcellular location is the cytoplasm. The catalysed reaction is alpha-D-glucosamine 1-phosphate + acetyl-CoA = N-acetyl-alpha-D-glucosamine 1-phosphate + CoA + H(+). The enzyme catalyses N-acetyl-alpha-D-glucosamine 1-phosphate + UTP + H(+) = UDP-N-acetyl-alpha-D-glucosamine + diphosphate. It functions in the pathway nucleotide-sugar biosynthesis; UDP-N-acetyl-alpha-D-glucosamine biosynthesis; N-acetyl-alpha-D-glucosamine 1-phosphate from alpha-D-glucosamine 6-phosphate (route II): step 2/2. It participates in nucleotide-sugar biosynthesis; UDP-N-acetyl-alpha-D-glucosamine biosynthesis; UDP-N-acetyl-alpha-D-glucosamine from N-acetyl-alpha-D-glucosamine 1-phosphate: step 1/1. Its pathway is bacterial outer membrane biogenesis; LPS lipid A biosynthesis. In terms of biological role, catalyzes the last two sequential reactions in the de novo biosynthetic pathway for UDP-N-acetylglucosamine (UDP-GlcNAc). The C-terminal domain catalyzes the transfer of acetyl group from acetyl coenzyme A to glucosamine-1-phosphate (GlcN-1-P) to produce N-acetylglucosamine-1-phosphate (GlcNAc-1-P), which is converted into UDP-GlcNAc by the transfer of uridine 5-monophosphate (from uridine 5-triphosphate), a reaction catalyzed by the N-terminal domain. This Paracoccus denitrificans (strain Pd 1222) protein is Bifunctional protein GlmU.